The sequence spans 243 residues: Adenosylcobinamide-GDP ribazoletransferase (243 aa).

The next 5 helical transmembrane spans lie at 31–51 (LLWY…AHLL), 61–81 (AAII…DGLA), 109–129 (IAVV…LSLL), 134–154 (GIYL…LLAT), and 188–208 (LLLG…FVWL).

Belongs to the CobS family. Mg(2+) is required as a cofactor.

The protein localises to the cell inner membrane. It carries out the reaction alpha-ribazole + adenosylcob(III)inamide-GDP = adenosylcob(III)alamin + GMP + H(+). The enzyme catalyses alpha-ribazole 5'-phosphate + adenosylcob(III)inamide-GDP = adenosylcob(III)alamin 5'-phosphate + GMP + H(+). It functions in the pathway cofactor biosynthesis; adenosylcobalamin biosynthesis; adenosylcobalamin from cob(II)yrinate a,c-diamide: step 7/7. Its function is as follows. Joins adenosylcobinamide-GDP and alpha-ribazole to generate adenosylcobalamin (Ado-cobalamin). Also synthesizes adenosylcobalamin 5'-phosphate from adenosylcobinamide-GDP and alpha-ribazole 5'-phosphate. In Ectopseudomonas mendocina (strain ymp) (Pseudomonas mendocina), this protein is Adenosylcobinamide-GDP ribazoletransferase.